We begin with the raw amino-acid sequence, 356 residues long: Phenylalanine--tRNA ligase alpha subunit (356 aa).

Glu-260 is a binding site for Mg(2+).

This sequence belongs to the class-II aminoacyl-tRNA synthetase family. Phe-tRNA synthetase alpha subunit type 1 subfamily. Tetramer of two alpha and two beta subunits. Mg(2+) serves as cofactor.

Its subcellular location is the cytoplasm. It catalyses the reaction tRNA(Phe) + L-phenylalanine + ATP = L-phenylalanyl-tRNA(Phe) + AMP + diphosphate + H(+). The chain is Phenylalanine--tRNA ligase alpha subunit from Gluconobacter oxydans (strain 621H) (Gluconobacter suboxydans).